Here is a 592-residue protein sequence, read N- to C-terminus: Arginine--tRNA ligase (592 aa).

Positions 112 to 122 match the 'HIGH' region motif; sequence VNPNKELHVGH.

The protein belongs to the class-I aminoacyl-tRNA synthetase family. As to quaternary structure, monomer.

Its subcellular location is the cytoplasm. It catalyses the reaction tRNA(Arg) + L-arginine + ATP = L-arginyl-tRNA(Arg) + AMP + diphosphate. This Thermus thermophilus (strain ATCC 27634 / DSM 579 / HB8) protein is Arginine--tRNA ligase.